The following is a 444-amino-acid chain: Glutamyl-tRNA reductase (444 aa).

Substrate-binding positions include 49–52 (TCNR), S117, 122–124 (EPQ), and Q128. The Nucleophile role is filled by C50. An NADP(+)-binding site is contributed by 202 to 207 (GAGETI).

The protein belongs to the glutamyl-tRNA reductase family. Homodimer.

The catalysed reaction is (S)-4-amino-5-oxopentanoate + tRNA(Glu) + NADP(+) = L-glutamyl-tRNA(Glu) + NADPH + H(+). It participates in porphyrin-containing compound metabolism; protoporphyrin-IX biosynthesis; 5-aminolevulinate from L-glutamyl-tRNA(Glu): step 1/2. Its function is as follows. Catalyzes the NADPH-dependent reduction of glutamyl-tRNA(Glu) to glutamate 1-semialdehyde (GSA). The sequence is that of Glutamyl-tRNA reductase from Mannheimia succiniciproducens (strain KCTC 0769BP / MBEL55E).